The following is a 181-amino-acid chain: Oligoribonuclease (181 aa).

Positions 8 to 171 (LIWIDLEMTG…DDIRESVAEL (164 aa)) constitute an Exonuclease domain. Tyr129 is an active-site residue.

It belongs to the oligoribonuclease family.

It is found in the cytoplasm. Functionally, 3'-to-5' exoribonuclease specific for small oligoribonucleotides. The protein is Oligoribonuclease of Yersinia pseudotuberculosis serotype O:1b (strain IP 31758).